A 272-amino-acid polypeptide reads, in one-letter code: Glutamate racemase (272 aa).

Substrate contacts are provided by residues 9–10 and 41–42; these read DS and YG. Catalysis depends on Cys-73, which acts as the Proton donor/acceptor. 74 to 75 contributes to the substrate binding site; that stretch reads NT. The active-site Proton donor/acceptor is the Cys-183. 184 to 185 serves as a coordination point for substrate; that stretch reads TH.

It belongs to the aspartate/glutamate racemases family.

It catalyses the reaction L-glutamate = D-glutamate. It functions in the pathway cell wall biogenesis; peptidoglycan biosynthesis. Functionally, provides the (R)-glutamate required for cell wall biosynthesis. This Shewanella sp. (strain MR-7) protein is Glutamate racemase.